A 303-amino-acid chain; its full sequence is Bifunctional protein FolD (303 aa).

NADP(+) is bound by residues 175–177 and isoleucine 243; that span reads GVS.

This sequence belongs to the tetrahydrofolate dehydrogenase/cyclohydrolase family. Homodimer.

It carries out the reaction (6R)-5,10-methylene-5,6,7,8-tetrahydrofolate + NADP(+) = (6R)-5,10-methenyltetrahydrofolate + NADPH. It catalyses the reaction (6R)-5,10-methenyltetrahydrofolate + H2O = (6R)-10-formyltetrahydrofolate + H(+). It participates in one-carbon metabolism; tetrahydrofolate interconversion. In terms of biological role, catalyzes the oxidation of 5,10-methylenetetrahydrofolate to 5,10-methenyltetrahydrofolate and then the hydrolysis of 5,10-methenyltetrahydrofolate to 10-formyltetrahydrofolate. This chain is Bifunctional protein FolD, found in Xanthomonas axonopodis pv. citri (strain 306).